Consider the following 322-residue polypeptide: Ribonuclease Z (322 aa).

His60, His62, Asp64, His65, His140, Asp210, and His270 together coordinate Zn(2+). Asp64 (proton acceptor) is an active-site residue.

Belongs to the RNase Z family. Homodimer. It depends on Zn(2+) as a cofactor.

The catalysed reaction is Endonucleolytic cleavage of RNA, removing extra 3' nucleotides from tRNA precursor, generating 3' termini of tRNAs. A 3'-hydroxy group is left at the tRNA terminus and a 5'-phosphoryl group is left at the trailer molecule.. Its function is as follows. Zinc phosphodiesterase, which displays some tRNA 3'-processing endonuclease activity. Probably involved in tRNA maturation, by removing a 3'-trailer from precursor tRNA. This chain is Ribonuclease Z, found in Methanococcus aeolicus (strain ATCC BAA-1280 / DSM 17508 / OCM 812 / Nankai-3).